Reading from the N-terminus, the 426-residue chain is 3-phosphoshikimate 1-carboxyvinyltransferase (426 aa).

3 residues coordinate 3-phosphoshikimate: Lys20, Ser21, and Arg25. A phosphoenolpyruvate-binding site is contributed by Lys20. Positions 92 and 120 each coordinate phosphoenolpyruvate. Residues Ser165, Gln167, Asp313, and Lys340 each contribute to the 3-phosphoshikimate site. Gln167 lines the phosphoenolpyruvate pocket. Asp313 functions as the Proton acceptor in the catalytic mechanism. 2 residues coordinate phosphoenolpyruvate: Arg344 and Arg386.

This sequence belongs to the EPSP synthase family. As to quaternary structure, monomer.

Its subcellular location is the cytoplasm. The catalysed reaction is 3-phosphoshikimate + phosphoenolpyruvate = 5-O-(1-carboxyvinyl)-3-phosphoshikimate + phosphate. It functions in the pathway metabolic intermediate biosynthesis; chorismate biosynthesis; chorismate from D-erythrose 4-phosphate and phosphoenolpyruvate: step 6/7. In terms of biological role, catalyzes the transfer of the enolpyruvyl moiety of phosphoenolpyruvate (PEP) to the 5-hydroxyl of shikimate-3-phosphate (S3P) to produce enolpyruvyl shikimate-3-phosphate and inorganic phosphate. The protein is 3-phosphoshikimate 1-carboxyvinyltransferase of Brevibacillus brevis (strain 47 / JCM 6285 / NBRC 100599).